Consider the following 382-residue polypeptide: Lipid-A-disaccharide synthase (382 aa).

Belongs to the LpxB family.

The catalysed reaction is a lipid X + a UDP-2-N,3-O-bis[(3R)-3-hydroxyacyl]-alpha-D-glucosamine = a lipid A disaccharide + UDP + H(+). It participates in bacterial outer membrane biogenesis; LPS lipid A biosynthesis. Condensation of UDP-2,3-diacylglucosamine and 2,3-diacylglucosamine-1-phosphate to form lipid A disaccharide, a precursor of lipid A, a phosphorylated glycolipid that anchors the lipopolysaccharide to the outer membrane of the cell. The chain is Lipid-A-disaccharide synthase from Dechloromonas aromatica (strain RCB).